The sequence spans 302 residues: MSDALYESSIQSLPLLGKGKVRDNYAVGDDKLLIVTTDRLSAFDVILGEPIPAKGRVLNQMANFWFKKLAHIVPNHETDVTAESVVAPNEVEQVKGRAVVVKRLKPILVEAVVRGYLAGSGWKDYQATGKVCGIALPAGLQNAQKLPEPIFTPAAKAEMGEHDENISFDEVEARIGKELAAKMRDISIRLYKEAADYAATRGIIIADTKFEFGLDENGTLTLMDEVLTADSSRFWPADSYQVGTNPPSFDKQFVRDWLEAVRIDGKPWPKTAPAPKLPEDVVQKTADKYKEALTRLTGEALQ.

Belongs to the SAICAR synthetase family.

The enzyme catalyses 5-amino-1-(5-phospho-D-ribosyl)imidazole-4-carboxylate + L-aspartate + ATP = (2S)-2-[5-amino-1-(5-phospho-beta-D-ribosyl)imidazole-4-carboxamido]succinate + ADP + phosphate + 2 H(+). The protein operates within purine metabolism; IMP biosynthesis via de novo pathway; 5-amino-1-(5-phospho-D-ribosyl)imidazole-4-carboxamide from 5-amino-1-(5-phospho-D-ribosyl)imidazole-4-carboxylate: step 1/2. The sequence is that of Phosphoribosylaminoimidazole-succinocarboxamide synthase from Cupriavidus metallidurans (strain ATCC 43123 / DSM 2839 / NBRC 102507 / CH34) (Ralstonia metallidurans).